The sequence spans 558 residues: uncharacterized protein (558 aa).

Residues Asn-531–Arg-558 form a disordered region.

This is an uncharacterized protein from Saccharomyces cerevisiae (strain ATCC 204508 / S288c) (Baker's yeast).